Consider the following 555-residue polypeptide: MIHAFIKKGCFQDSVSLMIISRKLSESENVDDVSVMMGTPANKALLDTTGFWHDDFNNATPNDICVAIRSEAADAGIAQAIMQQLEEALKQLAQGSGSSQALTQVRRWDSACQKLPDANLALISVAGEYAAELANQALDRNLNVMMFSDNVTLEDEIQLKTRAREKGLLVMGPDCGTSMIAGTPLAFANVMPEGNIGVIGASGTGIQELCSQIALAGEGITHAIGLGGRDLSREVGGISALTALEMLSADEKSEVLAFVSKPPAEAVRLKIVNAMKATGKPTVALFLGYTPAVARDENVWFASSLDEAARLACLLSRVTARRNAIAPVSSGFICGLYTGGTLAAEAAGLLAGHLGVEADDTHQHGMMLDADSHQIIDLGDDFYTVGRPHPMIDPTLRNQLIADLGAKPQVRVLLLDVVIGFGATADPAASLVSAWQKACAARLDNQPLYAIATVTGTERDPQCRSQQIATLEDAGIAVVSSLPEATLLAAALIHPLSPAAQQHTPSLLENVAVINIGLRSFALELQSASKPVVHYQWSPVAGGNKKLARLLERLQ.

It belongs to the AllF family. The OXTCase is composed of 3 subunits, AllF, AllG and AllH. The cofactor is Mg(2+).

The catalysed reaction is oxamate + carbamoyl phosphate = N-carbamoyl-2-oxoglycine + phosphate. Its pathway is nitrogen metabolism; (S)-allantoin degradation. In terms of biological role, component of a carbamoyltransferase involved in the anaerobic nitrogen utilization via the assimilation of allantoin. Catalyzes the conversion of oxalurate (N-carbamoyl-2-oxoglycine) to oxamate and carbamoyl phosphate. The polypeptide is Oxamate carbamoyltransferase subunit AllF (Escherichia coli (strain K12)).